Here is a 465-residue protein sequence, read N- to C-terminus: Alpha-2A adrenergic receptor (465 aa).

The Extracellular portion of the chain corresponds to 1 to 48 (MFRQEQPLAEGSFAPMGSLQPEAGNASWNGTEAPGGGARATPYSLQVT). 2 N-linked (GlcNAc...) asparagine glycosylation sites follow: asparagine 25 and asparagine 29. A helical transmembrane segment spans residues 49 to 74 (LTLVCLAGLLMLFTVFGNVLVIIAVF). The Cytoplasmic portion of the chain corresponds to 75–85 (TSRALKAPQNL). The chain crosses the membrane as a helical span at residues 86–111 (FLVSLASADILVATLVIPFSLANEVM). The Extracellular portion of the chain corresponds to 112 to 121 (GYWYFGKAWC). Cysteine 121 and cysteine 203 form a disulfide bridge. Residues 122–144 (EIYLALDVLFCTSSIVHLCAISL) traverse the membrane as a helical segment. The Cytoplasmic portion of the chain corresponds to 145–164 (DRYWSITQAIEYNLKRTPRR). The chain crosses the membrane as a helical span at residues 165–188 (IKAIIVTVWVISAVISFPPLISIE). The Extracellular portion of the chain corresponds to 189–207 (KKAGGGGQQPAEPRCEIND). Residues 208–232 (QKWYVISSCIGSFFAPCLIMILVYV) traverse the membrane as a helical segment. Topologically, residues 233–389 (RIYQIAKRRT…RQNREKRFTF (157 aa)) are cytoplasmic. Residues 242 to 377 (TRVPPSRRGP…RGGVAKASRW (136 aa)) are disordered. The segment covering 313 to 330 (SSEHAERPPGPRRSERGP) has biased composition (basic and acidic residues). Serine 346 bears the Phosphoserine mark. Arginine 368 bears the Omega-N-methylarginine mark. The helical transmembrane segment at 390 to 414 (VLAVVIGVFVVCWFPFFFTYTLTAV) threads the bilayer. Over 415–424 (GCSVPPTLFK) the chain is Extracellular. Residues 425-445 (FFFWFGYCNSSLNPVIYTIFN) form a helical membrane-spanning segment. The Cytoplasmic portion of the chain corresponds to 446–465 (HDFRRAFKKILCRGDRKRIV). Residue cysteine 457 is the site of S-palmitoyl cysteine attachment.

It belongs to the G-protein coupled receptor 1 family. Adrenergic receptor subfamily. ADRA2A sub-subfamily.

It is found in the cell membrane. In terms of biological role, alpha-2 adrenergic receptors mediate the catecholamine-induced inhibition of adenylate cyclase through the action of G proteins. This is Alpha-2A adrenergic receptor from Sus scrofa (Pig).